Consider the following 247-residue polypeptide: Coproheme decarboxylase (247 aa).

Residues Arg-129, 143–147 (YPMDK), His-170, Gln-183, and Ser-221 contribute to the Fe-coproporphyrin III site. Tyr-143 is an active-site residue.

It belongs to the ChdC family. Type 1 subfamily. The cofactor is Fe-coproporphyrin III.

The catalysed reaction is Fe-coproporphyrin III + 2 H2O2 + 2 H(+) = heme b + 2 CO2 + 4 H2O. It carries out the reaction Fe-coproporphyrin III + H2O2 + H(+) = harderoheme III + CO2 + 2 H2O. It catalyses the reaction harderoheme III + H2O2 + H(+) = heme b + CO2 + 2 H2O. Its pathway is porphyrin-containing compound metabolism; protoheme biosynthesis. In terms of biological role, involved in coproporphyrin-dependent heme b biosynthesis. Catalyzes the decarboxylation of Fe-coproporphyrin III (coproheme) to heme b (protoheme IX), the last step of the pathway. The reaction occurs in a stepwise manner with a three-propionate intermediate. The chain is Coproheme decarboxylase from Bacillus cereus (strain AH820).